A 629-amino-acid chain; its full sequence is Keratin, type II cytoskeletal 3 (629 aa).

Positions 1 to 182 are head; that stretch reads MNRQVCKTSG…DPQIGQVRAQ (182 aa). A phosphoserine mark is found at S13 and S62. Positions 183-218 are coil 1A; it reads EREQIKTLNNKFASFIDKVRFLEQQNKVLETKWELL. One can recognise an IF rod domain in the interval 183–498; that stretch reads EREQIKTLNN…KLLEGEESRM (316 aa). The linker 1 stretch occupies residues 219–239; it reads QRQGPNSVTGTNNLEPLFENR. Residues 240 to 331 form a coil 1B region; that stretch reads INYLRSYLDS…TLYDAELSQM (92 aa). At K281 the chain carries N6,N6-dimethyllysine. The linker 12 stretch occupies residues 332–355; it reads QSHVSDMSVVLSMDNNRSLDLDSI. S349 bears the Phosphoserine mark. The tract at residues 356-494 is coil 2; the sequence is IAEVRAQYED…ATYRKLLEGE (139 aa). The interval 495 to 629 is tail; the sequence is ESRMSGECQS…FSQSSQRYSR (135 aa). Positions 603–629 are disordered; it reads SGGGFSSGSSSRGSSVKFSQSSQRYSR. Over residues 618 to 629 the composition is skewed to polar residues; that stretch reads VKFSQSSQRYSR.

Belongs to the intermediate filament family. Heterotetramer of two type I and two type II keratins. Keratin-3 associates with keratin-12. As to expression, cornea specific. Expressed in the basal cells of corneal epithelium and stroma. Also expressed in esophageal epithelium.

In Oryctolagus cuniculus (Rabbit), this protein is Keratin, type II cytoskeletal 3 (KRT3).